The primary structure comprises 284 residues: 4-diphosphocytidyl-2-C-methyl-D-erythritol kinase (284 aa).

Residue K17 is part of the active site. 100-110 (PMGGGLGGGSS) is a binding site for ATP. D142 is a catalytic residue.

It belongs to the GHMP kinase family. IspE subfamily.

It carries out the reaction 4-CDP-2-C-methyl-D-erythritol + ATP = 4-CDP-2-C-methyl-D-erythritol 2-phosphate + ADP + H(+). It functions in the pathway isoprenoid biosynthesis; isopentenyl diphosphate biosynthesis via DXP pathway; isopentenyl diphosphate from 1-deoxy-D-xylulose 5-phosphate: step 3/6. Catalyzes the phosphorylation of the position 2 hydroxy group of 4-diphosphocytidyl-2C-methyl-D-erythritol. The chain is 4-diphosphocytidyl-2-C-methyl-D-erythritol kinase from Aromatoleum aromaticum (strain DSM 19018 / LMG 30748 / EbN1) (Azoarcus sp. (strain EbN1)).